A 142-amino-acid chain; its full sequence is Hemoglobin subunit alpha-A (142 aa).

Residues 2-142 enclose the Globin domain; sequence VLSAADKGNV…VATVLTAKYR (141 aa). H59 is an O2 binding site. H88 is a heme b binding site.

It belongs to the globin family. As to quaternary structure, heterotetramer of two alpha chains and two beta chains. Red blood cells.

Its function is as follows. Involved in oxygen transport from the lung to the various peripheral tissues. This Anseranas semipalmata (Magpie goose) protein is Hemoglobin subunit alpha-A (HBAA).